The following is a 326-amino-acid chain: uncharacterized protein (326 aa).

Solcar repeat units follow at residues 15–106 (EFLV…VRRV), 114–215 (ETHA…ATDF), and 234–322 (LKTW…SKAL). Transmembrane regions (helical) follow at residues 16–36 (FLVKSGIAGGTAGCVAKSVVA), 83–103 (TATLYRVFPYAGIKFVAYEQV), 120–140 (FLSGSLAGTCSVFFTYPLELI), 191–211 (FSVTLTGIFPYAGMSFLAYDL), 240–260 (LLCGAFAGVCGQTVSYPFEVC), and 294–314 (FFVGLTIGYIKVIPMVSTSFF).

The protein belongs to the mitochondrial carrier (TC 2.A.29) family.

Its subcellular location is the mitochondrion inner membrane. This is an uncharacterized protein from Schizosaccharomyces pombe (strain 972 / ATCC 24843) (Fission yeast).